The sequence spans 346 residues: Selenocysteine Se-methyltransferase (346 aa).

Positions 13–330 (SMKELLKETG…TTIRAIHKRL (318 aa)) constitute a Hcy-binding domain. Residues cysteine 248, cysteine 315, and cysteine 316 each contribute to the Zn(2+) site.

It depends on Zn(2+) as a cofactor. As to expression, expressed in roots, young leaves and florets, but not detected in plants not exposed to selenium.

The enzyme catalyses S-methyl-L-methionine + L-selenocysteine = Se-methyl-L-selenocysteine + L-methionine + H(+). Inhibited by L-methionine. In terms of biological role, catalyzes the methylation of DL- and L-selenocysteine with S-methylmethionine as donor. Also methylates DL-homocysteine, DL- and L-cysteine in vitro. May be involved in selenium detoxification. The chain is Selenocysteine Se-methyltransferase (SMT) from Brassica oleracea var. italica (Broccoli).